A 191-amino-acid chain; its full sequence is FMN-dependent NADH:quinone oxidoreductase 1 (191 aa).

FMN contacts are provided by residues serine 10 and 16 to 18; that span reads SVS.

It belongs to the azoreductase type 1 family. In terms of assembly, homodimer. The cofactor is FMN.

The enzyme catalyses 2 a quinone + NADH + H(+) = 2 a 1,4-benzosemiquinone + NAD(+). It carries out the reaction N,N-dimethyl-1,4-phenylenediamine + anthranilate + 2 NAD(+) = 2-(4-dimethylaminophenyl)diazenylbenzoate + 2 NADH + 2 H(+). In terms of biological role, quinone reductase that provides resistance to thiol-specific stress caused by electrophilic quinones. Its function is as follows. Also exhibits azoreductase activity. Catalyzes the reductive cleavage of the azo bond in aromatic azo compounds to the corresponding amines. This chain is FMN-dependent NADH:quinone oxidoreductase 1, found in Jannaschia sp. (strain CCS1).